A 471-amino-acid chain; its full sequence is Probable ribonuclease FAU-1 (471 aa).

An S1 motif domain is found at 93–139 (GAVFDAAVDHTVGGGAILDLGDDREAYLPFGAVDDHVTDGDTLRVAI).

Belongs to the FAU-1 family.

Functionally, probable RNase involved in rRNA stability through maturation and/or degradation of precursor rRNAs. Binds to RNA in loop regions with AU-rich sequences. The chain is Probable ribonuclease FAU-1 from Halobacterium salinarum (strain ATCC 29341 / DSM 671 / R1).